The following is a 290-amino-acid chain: Ribosomal RNA small subunit methyltransferase A (290 aa).

S-adenosyl-L-methionine is bound by residues asparagine 27, leucine 29, glycine 54, glutamate 75, aspartate 100, and asparagine 125.

Belongs to the class I-like SAM-binding methyltransferase superfamily. rRNA adenine N(6)-methyltransferase family. RsmA subfamily.

Its subcellular location is the cytoplasm. The enzyme catalyses adenosine(1518)/adenosine(1519) in 16S rRNA + 4 S-adenosyl-L-methionine = N(6)-dimethyladenosine(1518)/N(6)-dimethyladenosine(1519) in 16S rRNA + 4 S-adenosyl-L-homocysteine + 4 H(+). Specifically dimethylates two adjacent adenosines (A1518 and A1519) in the loop of a conserved hairpin near the 3'-end of 16S rRNA in the 30S particle. May play a critical role in biogenesis of 30S subunits. In Streptococcus pneumoniae (strain CGSP14), this protein is Ribosomal RNA small subunit methyltransferase A.